Reading from the N-terminus, the 317-residue chain is Lysosomal-associated transmembrane protein 4B (317 aa).

The segment at 25–73 is disordered; that stretch reads AFGAKGTDPAEARSSRGIEEAGPRAHGRAGREPERRRSRQQRRGGLQAR. Residues 32-59 are compositionally biased toward basic and acidic residues; the sequence is DPAEARSSRGIEEAGPRAHGRAGREPER. The next 4 helical transmembrane spans lie at 117 to 137, 163 to 183, 191 to 211, and 244 to 264; these read ILLGVWYLIINAVVLLILLSA, MCIAIAISLLMILICAMATYG, WIIPFFCYQIFDFALNMLVAI, and CLVLIILLFISIILTFKGYLI. The required for NEDD4 interaction stretch occupies residues 205–221; that stretch reads LNMLVAITVLIYPNSIQ.

It belongs to the LAPTM4/LAPTM5 transporter family. As to quaternary structure, homooligomer; upon reaching the lysosomes. Interacts with MCOLN1. Interacts with NEDD4; may play a role in the lysosomal sorting of LAPTM4B; enhances HGS association with NEDD4; mediates inhibition of EGFR degradation. Interacts with PIP5K1C; promotes SNX5 association with LAPTM4B; kinase activity of PIP5K1C is required; interaction is regulated by phosphatidylinositol 4,5-bisphosphate generated by PIP5K1C. Interacts with HGS; promotes HGS ubiquitination. Interacts with SNX5. Interacts with SLC3A2 and SLC7A5; recruits SLC3A2 and SLC7A5 to lysosomes to promote leucine uptake into these organelles and is required for mTORC1 activation. Interacts with LRRC32; decreases TGFB1 production in regulatory T cells. Interacts with BECN1; competes with EGFR for LAPTM4B binding; regulates EGFR activity. Interacts with EGFR; positively correlates with EGFR activation. Post-translationally, undergoes proteolytic cleavage following delivery to the lysosomes. In terms of processing, ubiquitinated by NEDD4.

The protein localises to the endomembrane system. It localises to the late endosome membrane. Its subcellular location is the cell membrane. It is found in the cell projection. The protein resides in the lysosome membrane. The protein localises to the endosome membrane. It localises to the endosome. Its subcellular location is the multivesicular body membrane. It is found in the multivesicular body lumen. Its function is as follows. Required for optimal lysosomal function. Blocks EGF-stimulated EGFR intraluminal sorting and degradation. Conversely by binding with the phosphatidylinositol 4,5-bisphosphate, regulates its PIP5K1C interaction, inhibits HGS ubiquitination and relieves LAPTM4B inhibition of EGFR degradation. Recruits SLC3A2 and SLC7A5 (the Leu transporter) to the lysosome, promoting entry of leucine and other essential amino acid (EAA) into the lysosome, stimulating activation of proton-transporting vacuolar (V)-ATPase protein pump (V-ATPase) and hence mTORC1 activation. Plays a role as negative regulator of TGFB1 production in regulatory T cells. Binds ceramide and facilitates its exit from late endosome in order to control cell death pathways. The polypeptide is Lysosomal-associated transmembrane protein 4B (Homo sapiens (Human)).